Consider the following 391-residue polypeptide: F-box only protein 5 (391 aa).

One can recognise an F-box domain in the interval 198-245; it reads AELFHRDFKHLLTKILRHLSAMDLINVISVSTTWRKILQKDNSAYNSY. The segment at 318–366 adopts a ZBR-type zinc-finger fold; sequence CLKVCVDCSSPAKYDPYLHRATCTRESCKFDFCTLCSCKYHGSKCCQTS. Zn(2+)-binding residues include cysteine 322, cysteine 325, cysteine 340, cysteine 345, cysteine 350, cysteine 353, histidine 358, and cysteine 363. A disordered region spans residues 365–391; sequence TSKPRSYRVPSEPLPGSKKSKQNLRRL. Basic residues predominate over residues 382–391; that stretch reads KKSKQNLRRL.

Part of a SCF (SKP1-cullin-F-box) protein ligase complex. Interacts with btrc. Interacts with skp1. Interacts with cdc20. Interacts with pin1; stabilizes fbxo5 by preventing its association with btrc in an isomerization-dependent pathway; this interaction is present during G2 phase and prevents fbxo5 degradation. Interacts with plk1. In terms of processing, proteolysed; proteolysis is induced by both cyclin B-cdk1 and cyclin A-cdk1/2 complex through probable phosphorylation. Proteolysis is inhibited by pin1 during G2.

The protein resides in the nucleus. It localises to the cytoplasm. The protein localises to the cytoskeleton. Its subcellular location is the spindle. It is found in the microtubule organizing center. The protein resides in the centrosome. Its pathway is protein modification; protein ubiquitination. Regulates progression through early mitosis by inhibiting the anaphase promoting complex/cyclosome (APC). Binds to the APC activators cdc20 to prevent APC activation. Can also bind directly to the APC to inhibit substrate-binding. Required to arrest unfertilized eggs at metaphase of meiosis II, by preventing their release from metaphase of meiosis II, through inhibition of APC-dependent cyclin B destruction leading to stabilization of cyclin B-cdk1 complex activity. The chain is F-box only protein 5 from Xenopus tropicalis (Western clawed frog).